The sequence spans 579 residues: 2-succinyl-5-enolpyruvyl-6-hydroxy-3-cyclohexene-1-carboxylate synthase (579 aa).

Belongs to the TPP enzyme family. MenD subfamily. Homodimer. Requires Mg(2+) as cofactor. It depends on Mn(2+) as a cofactor. The cofactor is thiamine diphosphate.

The catalysed reaction is isochorismate + 2-oxoglutarate + H(+) = 5-enolpyruvoyl-6-hydroxy-2-succinyl-cyclohex-3-ene-1-carboxylate + CO2. It participates in quinol/quinone metabolism; 1,4-dihydroxy-2-naphthoate biosynthesis; 1,4-dihydroxy-2-naphthoate from chorismate: step 2/7. The protein operates within quinol/quinone metabolism; menaquinone biosynthesis. Its function is as follows. Catalyzes the thiamine diphosphate-dependent decarboxylation of 2-oxoglutarate and the subsequent addition of the resulting succinic semialdehyde-thiamine pyrophosphate anion to isochorismate to yield 2-succinyl-5-enolpyruvyl-6-hydroxy-3-cyclohexene-1-carboxylate (SEPHCHC). This Oceanobacillus iheyensis (strain DSM 14371 / CIP 107618 / JCM 11309 / KCTC 3954 / HTE831) protein is 2-succinyl-5-enolpyruvyl-6-hydroxy-3-cyclohexene-1-carboxylate synthase.